The primary structure comprises 274 residues: Shikimate dehydrogenase (NADP(+)) (274 aa).

Residues 14-16 and Thr-61 contribute to the shikimate site; that span reads SLS. Lys-65 functions as the Proton acceptor in the catalytic mechanism. 2 residues coordinate shikimate: Asn-85 and Asp-106. NADP(+) contacts are provided by residues 130 to 134, 153 to 158, and Ala-217; these read GAGGA and NRTAER. A shikimate-binding site is contributed by Tyr-219. Gly-240 serves as a coordination point for NADP(+).

It belongs to the shikimate dehydrogenase family. As to quaternary structure, homodimer.

The catalysed reaction is shikimate + NADP(+) = 3-dehydroshikimate + NADPH + H(+). It participates in metabolic intermediate biosynthesis; chorismate biosynthesis; chorismate from D-erythrose 4-phosphate and phosphoenolpyruvate: step 4/7. Functionally, involved in the biosynthesis of the chorismate, which leads to the biosynthesis of aromatic amino acids. Catalyzes the reversible NADPH linked reduction of 3-dehydroshikimate (DHSA) to yield shikimate (SA). This chain is Shikimate dehydrogenase (NADP(+)), found in Halorubrum lacusprofundi (strain ATCC 49239 / DSM 5036 / JCM 8891 / ACAM 34).